A 748-amino-acid chain; its full sequence is SNF-related serine/threonine-protein kinase (748 aa).

The Protein kinase domain occupies 16–269; it reads YDLDKTLGRG…LEEIESHPWL (254 aa). ATP-binding positions include 22 to 30 and lysine 45; that span reads LGRGHFAVV. Residue aspartate 139 is the Proton acceptor of the active site. Position 162 is a phosphoserine (serine 162). Threonine 173 carries the post-translational modification Phosphothreonine; by LKB1. The UBA domain occupies 291–334; it reads SEEEHNSIIQRMVLGDIADRDAIVEALETNRYNHITATYFLLAE. Residues serine 362, serine 390, serine 482, serine 495, and serine 518 each carry the phosphoserine modification. A disordered region spans residues 383–415; it reads SHATVPQSPARAGDNVLNGHRSKGLCDPAKKDE. Over residues 491 to 503 the composition is skewed to acidic residues; the sequence is EEGESDDEFDMDE. The tract at residues 491–640 is disordered; sequence EEGESDDEFD…SPSPASASAA (150 aa). Basic residues predominate over residues 522-532; the sequence is VHKRYHRRKSQ. Positions 533 to 542 are enriched in low complexity; the sequence is GRGSSCSSSE. The residue at position 534 (arginine 534) is an Omega-N-methylarginine. The segment covering 549-558 has biased composition (basic and acidic residues); it reads ESRRRLDKDS. 2 stretches are compositionally biased toward gly residues: residues 575-592 and 600-614; these read GSEGDGGGQSKPSSGGGV and QGTGGGSQGGSGGTP. A Phosphoserine modification is found at serine 606. The segment covering 629-640 has biased composition (low complexity); sequence SSSPSPASASAA.

The protein belongs to the protein kinase superfamily. CAMK Ser/Thr protein kinase family. Mg(2+) serves as cofactor. Autophosphorylated. Phosphorylation on Thr-173 by STK11/LKB1 in complex with STE20-related adapter-alpha (STRADA) pseudo kinase and CAB39. Ubiquitously expressed in all tissues examined.

Its subcellular location is the nucleus. The catalysed reaction is L-seryl-[protein] + ATP = O-phospho-L-seryl-[protein] + ADP + H(+). The enzyme catalyses L-threonyl-[protein] + ATP = O-phospho-L-threonyl-[protein] + ADP + H(+). Its activity is regulated as follows. Activated by phosphorylation on Thr-173. May play a role in hematopoietic cell proliferation or differentiation. Potential mediator of neuronal apoptosis. This Mus musculus (Mouse) protein is SNF-related serine/threonine-protein kinase.